Here is a 338-residue protein sequence, read N- to C-terminus: Anthranilate phosphoribosyltransferase (338 aa).

5-phospho-alpha-D-ribose 1-diphosphate contacts are provided by residues Gly-78, 81–82 (GD), Thr-86, 88–91 (NIST), 106–114 (KHGNRSVSS), and Ser-118. Gly-78 lines the anthranilate pocket. Ser-90 provides a ligand contact to Mg(2+). Asn-109 serves as a coordination point for anthranilate. Arg-164 contacts anthranilate. Mg(2+) contacts are provided by Asp-223 and Glu-224.

Belongs to the anthranilate phosphoribosyltransferase family. As to quaternary structure, homodimer. It depends on Mg(2+) as a cofactor.

The catalysed reaction is N-(5-phospho-beta-D-ribosyl)anthranilate + diphosphate = 5-phospho-alpha-D-ribose 1-diphosphate + anthranilate. Its pathway is amino-acid biosynthesis; L-tryptophan biosynthesis; L-tryptophan from chorismate: step 2/5. Its function is as follows. Catalyzes the transfer of the phosphoribosyl group of 5-phosphorylribose-1-pyrophosphate (PRPP) to anthranilate to yield N-(5'-phosphoribosyl)-anthranilate (PRA). This chain is Anthranilate phosphoribosyltransferase, found in Bacillus velezensis (strain DSM 23117 / BGSC 10A6 / LMG 26770 / FZB42) (Bacillus amyloliquefaciens subsp. plantarum).